Here is a 168-residue protein sequence, read N- to C-terminus: ATP synthase subunit b (168 aa).

The chain crosses the membrane as a helical span at residues 13-33 (WTFLFQTLNLLVVMGLLYVFL).

The protein belongs to the ATPase B chain family. In terms of assembly, F-type ATPases have 2 components, F(1) - the catalytic core - and F(0) - the membrane proton channel. F(1) has five subunits: alpha(3), beta(3), gamma(1), delta(1), epsilon(1). F(0) has three main subunits: a(1), b(2) and c(10-14). The alpha and beta chains form an alternating ring which encloses part of the gamma chain. F(1) is attached to F(0) by a central stalk formed by the gamma and epsilon chains, while a peripheral stalk is formed by the delta and b chains.

The protein resides in the cell membrane. Its function is as follows. F(1)F(0) ATP synthase produces ATP from ADP in the presence of a proton or sodium gradient. F-type ATPases consist of two structural domains, F(1) containing the extramembraneous catalytic core and F(0) containing the membrane proton channel, linked together by a central stalk and a peripheral stalk. During catalysis, ATP synthesis in the catalytic domain of F(1) is coupled via a rotary mechanism of the central stalk subunits to proton translocation. Functionally, component of the F(0) channel, it forms part of the peripheral stalk, linking F(1) to F(0). The protein is ATP synthase subunit b of Moorella thermoacetica (strain ATCC 39073 / JCM 9320).